The sequence spans 31 residues: MIGGLFLNTLSFVIVSNHVIVNNTANVHHTQ.

The protein belongs to the coronaviruses NS3b protein family.

In Canine coronavirus (strain Insavc-1) (CCoV), this protein is Putative truncated non-structural protein 3b.